Here is a 129-residue protein sequence, read N- to C-terminus: Profilin-4 (129 aa).

The protein belongs to the profilin family.

The protein localises to the cytoplasm. In terms of biological role, involved in male fertility. Required for manchette development and acrosome biogenesis during spermiogenesis. Binds in vitro to phospholipids, including phosphatidylinositol 3-phosphate (PtdIns(3)P), phosphatidylinositol 4,5-bisphosphate (PtdIns(4,5)P2), phosphatidylinositol 4-phosphate (PtdIns(4)P) and phosphatidic acid (PA). Contrary to other profilin family members, does not bind to actin in vitro. This Bos taurus (Bovine) protein is Profilin-4 (PFN4).